We begin with the raw amino-acid sequence, 375 residues long: E3 ubiquitin-protein ligase IE2 (375 aa).

Residues 1–12 (MSRINNADTPTN) are compositionally biased toward polar residues. Disordered regions lie at residues 1–61 (MSRI…VGDR) and 115–142 (LTTT…DYNS). The RING-type zinc finger occupies 177–225 (CHICSCTFTDIKNYNSNFVTSSECNHAVCFKCYVSIVFNKEAYKCSICN). The stretch at 272–348 (KTIIEELQLE…TFLQNQLDAQ (77 aa)) forms a coiled coil.

It belongs to the alphabaculovirus IE2 protein family. As to quaternary structure, homooligomer. Auto-ubiquitinated.

The protein localises to the host nucleus. The enzyme catalyses S-ubiquitinyl-[E2 ubiquitin-conjugating enzyme]-L-cysteine + [acceptor protein]-L-lysine = [E2 ubiquitin-conjugating enzyme]-L-cysteine + N(6)-ubiquitinyl-[acceptor protein]-L-lysine.. RING-finger E3 ubiquitin ligase that plays an important regulatory role during the initial stages of infection. Migrates to specific nuclear foci early in infection supposely to prepare the sites for viral replication by targeting and ubiquitinating host proteins. The chain is E3 ubiquitin-protein ligase IE2 (IE2) from Hyphantria cunea nuclear polyhedrosis virus (HcNPV).